The chain runs to 64 residues: Cytochrome c oxidase subunit 2 (64 aa).

The Mitochondrial intermembrane segment spans residues 1 to 14 (MAHPSQLGFQDAAS). Residues 15–45 (PVMEELXHFHDHTLMIVFLISTLVXYIIVAM) form a helical membrane-spanning segment. Topologically, residues 46–64 (VSTKLTNKYVLDSQEIEIV) are mitochondrial matrix.

Belongs to the cytochrome c oxidase subunit 2 family. Component of the cytochrome c oxidase (complex IV, CIV), a multisubunit enzyme composed of 14 subunits. The complex is composed of a catalytic core of 3 subunits MT-CO1, MT-CO2 and MT-CO3, encoded in the mitochondrial DNA, and 11 supernumerary subunits COX4I, COX5A, COX5B, COX6A, COX6B, COX6C, COX7A, COX7B, COX7C, COX8 and NDUFA4, which are encoded in the nuclear genome. The complex exists as a monomer or a dimer and forms supercomplexes (SCs) in the inner mitochondrial membrane with NADH-ubiquinone oxidoreductase (complex I, CI) and ubiquinol-cytochrome c oxidoreductase (cytochrome b-c1 complex, complex III, CIII), resulting in different assemblies (supercomplex SCI(1)III(2)IV(1) and megacomplex MCI(2)III(2)IV(2)). Found in a complex with TMEM177, COA6, COX18, COX20, SCO1 and SCO2. Interacts with TMEM177 in a COX20-dependent manner. Interacts with COX20. Interacts with COX16. The cofactor is Cu cation.

The protein localises to the mitochondrion inner membrane. It carries out the reaction 4 Fe(II)-[cytochrome c] + O2 + 8 H(+)(in) = 4 Fe(III)-[cytochrome c] + 2 H2O + 4 H(+)(out). In terms of biological role, component of the cytochrome c oxidase, the last enzyme in the mitochondrial electron transport chain which drives oxidative phosphorylation. The respiratory chain contains 3 multisubunit complexes succinate dehydrogenase (complex II, CII), ubiquinol-cytochrome c oxidoreductase (cytochrome b-c1 complex, complex III, CIII) and cytochrome c oxidase (complex IV, CIV), that cooperate to transfer electrons derived from NADH and succinate to molecular oxygen, creating an electrochemical gradient over the inner membrane that drives transmembrane transport and the ATP synthase. Cytochrome c oxidase is the component of the respiratory chain that catalyzes the reduction of oxygen to water. Electrons originating from reduced cytochrome c in the intermembrane space (IMS) are transferred via the dinuclear copper A center (CU(A)) of subunit 2 and heme A of subunit 1 to the active site in subunit 1, a binuclear center (BNC) formed by heme A3 and copper B (CU(B)). The BNC reduces molecular oxygen to 2 water molecules using 4 electrons from cytochrome c in the IMS and 4 protons from the mitochondrial matrix. In Scaphirhynchus platorynchus (Shovelnose sturgeon), this protein is Cytochrome c oxidase subunit 2 (mt-co2).